Reading from the N-terminus, the 101-residue chain is Small ribosomal subunit protein uS14 (101 aa).

Belongs to the universal ribosomal protein uS14 family. As to quaternary structure, part of the 30S ribosomal subunit. Contacts proteins S3 and S10.

In terms of biological role, binds 16S rRNA, required for the assembly of 30S particles and may also be responsible for determining the conformation of the 16S rRNA at the A site. In Haemophilus influenzae (strain PittGG), this protein is Small ribosomal subunit protein uS14.